A 392-amino-acid polypeptide reads, in one-letter code: AAA-ATPase At5g17750 (392 aa).

A helical membrane pass occupies residues 13–35 (MFSTYASLAGYIMMIKPMIHTII). An ATP-binding site is contributed by 227-234 (GPPGTGKS).

It belongs to the AAA ATPase family. BCS1 subfamily. It depends on Mg(2+) as a cofactor.

The protein resides in the membrane. It carries out the reaction ATP + H2O = ADP + phosphate + H(+). In Arabidopsis thaliana (Mouse-ear cress), this protein is AAA-ATPase At5g17750.